Here is a 154-residue protein sequence, read N- to C-terminus: OCIA domain-containing protein 2 (154 aa).

The OCIA domain occupies 1–120 (MASVSTHGNQ…HSFEDQLRGA (120 aa)). Lysine 41 is modified (N6-acetyllysine).

As to quaternary structure, interacts (via OCIA domain) with OCIAD1/ASRIJ and STAT3. Abundant in kidney, liver and brain.

The protein localises to the endosome. It is found in the mitochondrion. Its subcellular location is the mitochondrion inner membrane. Its function is as follows. Has an essential role in the assembly of mitochondrial respiratory chain complex III. Is also required for STAT3 activation and plays a role in cell migration. The sequence is that of OCIA domain-containing protein 2 (Ociad2) from Mus musculus (Mouse).